Here is a 727-residue protein sequence, read N- to C-terminus: Fatty acid oxidation complex subunit alpha (727 aa).

The enoyl-CoA hydratase stretch occupies residues 16 to 205 (NQTASVFSFD…RLGLVDDAVP (190 aa)). The interval 321 to 727 (AKIKHVGILG…MAEQNKSFYP (407 aa)) is 3-hydroxyacyl-CoA dehydrogenase.

In the N-terminal section; belongs to the enoyl-CoA hydratase/isomerase family. This sequence in the central section; belongs to the 3-hydroxyacyl-CoA dehydrogenase family. Heterotetramer of two alpha chains (FadJ) and two beta chains (FadI).

It is found in the cytoplasm. It catalyses the reaction a (3S)-3-hydroxyacyl-CoA = a (2E)-enoyl-CoA + H2O. It carries out the reaction a 4-saturated-(3S)-3-hydroxyacyl-CoA = a (3E)-enoyl-CoA + H2O. The enzyme catalyses a (3S)-3-hydroxyacyl-CoA + NAD(+) = a 3-oxoacyl-CoA + NADH + H(+). The catalysed reaction is (3S)-3-hydroxybutanoyl-CoA = (3R)-3-hydroxybutanoyl-CoA. It participates in lipid metabolism; fatty acid beta-oxidation. Its function is as follows. Catalyzes the formation of a hydroxyacyl-CoA by addition of water on enoyl-CoA. Also exhibits 3-hydroxyacyl-CoA epimerase and 3-hydroxyacyl-CoA dehydrogenase activities. The protein is Fatty acid oxidation complex subunit alpha of Photorhabdus laumondii subsp. laumondii (strain DSM 15139 / CIP 105565 / TT01) (Photorhabdus luminescens subsp. laumondii).